The sequence spans 195 residues: Protein hunchback (195 aa).

Disordered regions lie at residues 16–57 (SHHH…SHTN), 64–83 (LKQQQQQQQQHQHQQQQQPM), and 155–195 (LTPP…KYMA). Positions 17–29 (HHHHHHHAHHSHH) are enriched in basic residues. Low complexity-rich tracts occupy residues 33-44 (SNSNSNASSPHQ) and 66-81 (QQQQQQQQHQHQQQQQ). Residues 176 to 195 (EPEKEHDLMSNSSEDMKYMA) are compositionally biased toward basic and acidic residues.

It belongs to the hunchback C2H2-type zinc-finger protein family.

It localises to the nucleus. In terms of biological role, gap class segmentation protein that controls development of head structures. In Drosophila dasycnemia (Fruit fly), this protein is Protein hunchback (hb).